We begin with the raw amino-acid sequence, 131 residues long: Jacalin-related lectin 15 (131 aa).

The Jacalin-type lectin domain maps to 1–126 (MSTPSGSNPL…LTSLGAYFAP (126 aa)).

This sequence belongs to the jacalin lectin family. In terms of tissue distribution, expressed in the vascular and surrounding tissues in cotyledons. Detected in root apical meristems.

The sequence is that of Jacalin-related lectin 15 (JAL15) from Arabidopsis thaliana (Mouse-ear cress).